Reading from the N-terminus, the 443-residue chain is Endothelin receptor type B (443 aa).

The first 26 residues, methionine 1–serine 26, serve as a signal peptide directing secretion. The Extracellular segment spans residues glutamate 27–lysine 102. The disordered stretch occupies residues threonine 53 to proline 89. Polar residues predominate over residues serine 59–proline 69. The N-linked (GlcNAc...) asparagine glycan is linked to asparagine 60. A helical membrane pass occupies residues tyrosine 103 to isoleucine 127. Over tyrosine 128 to asparagine 138 the chain is Cytoplasmic. The helical transmembrane segment at isoleucine 139–leucine 164 threads the bilayer. Residues alanine 165–lysine 176 are Extracellular-facing. Cysteines 175 and 256 form a disulfide. The helical transmembrane segment at leucine 177–isoleucine 198 threads the bilayer. The Cytoplasmic portion of the chain corresponds to aspartate 199–threonine 219. A helical membrane pass occupies residues alanine 220–isoleucine 244. Over threonine 245–threonine 272 the chain is Extracellular. A helical transmembrane segment spans residues alanine 273 to methionine 297. At threonine 298–threonine 325 the chain is on the cytoplasmic side. Residue serine 306 is modified to Phosphoserine. A helical transmembrane segment spans residues valine 326–tyrosine 351. Topologically, residues aspartate 352–serine 363 are extracellular. N-linked (GlcNAc...) asparagine glycosylation occurs at asparagine 354. A helical transmembrane segment spans residues phenylalanine 364–valine 390. Topologically, residues serine 391–serine 443 are cytoplasmic. Residues cysteine 403, cysteine 404, and cysteine 406 are each lipidated (S-palmitoyl cysteine). Position 420 is a phosphoserine (serine 420). Tyrosine 440 is subject to Phosphotyrosine. 3 positions are modified to phosphoserine: serine 441, serine 442, and serine 443.

This sequence belongs to the G-protein coupled receptor 1 family. Endothelin receptor subfamily. EDNRB sub-subfamily.

Its subcellular location is the cell membrane. Non-specific receptor for endothelin 1, 2, and 3. Mediates its action by association with G proteins that activate a phosphatidylinositol-calcium second messenger system. This Sus scrofa (Pig) protein is Endothelin receptor type B (EDNRB).